The primary structure comprises 260 residues: Adenosylcobinamide-GDP ribazoletransferase (260 aa).

A run of 7 helical transmembrane segments spans residues 31-51 (FYFL…PIYF), 57-77 (IEIS…SIHL), 108-128 (YGTI…STII), 131-151 (AGLL…VVVF), 173-193 (FFFW…IAAF), 206-226 (LKYL…IRIS), and 240-260 (LIVE…NVHL).

The protein belongs to the CobS family. Requires Mg(2+) as cofactor.

The protein localises to the cell inner membrane. It catalyses the reaction alpha-ribazole + adenosylcob(III)inamide-GDP = adenosylcob(III)alamin + GMP + H(+). The catalysed reaction is alpha-ribazole 5'-phosphate + adenosylcob(III)inamide-GDP = adenosylcob(III)alamin 5'-phosphate + GMP + H(+). It participates in cofactor biosynthesis; adenosylcobalamin biosynthesis; adenosylcobalamin from cob(II)yrinate a,c-diamide: step 7/7. Joins adenosylcobinamide-GDP and alpha-ribazole to generate adenosylcobalamin (Ado-cobalamin). Also synthesizes adenosylcobalamin 5'-phosphate from adenosylcobinamide-GDP and alpha-ribazole 5'-phosphate. This is Adenosylcobinamide-GDP ribazoletransferase from Treponema denticola (strain ATCC 35405 / DSM 14222 / CIP 103919 / JCM 8153 / KCTC 15104).